The following is a 276-amino-acid chain: Rhomboid-type serine protease 2 (276 aa).

5 helical membrane-spanning segments follow: residues 27–47, 77–97, 109–129, 132–152, and 175–195; these read LPLFTRATVLIIVLTWVLTLV, FPFIHLNIFHTILNIVAFTPL, TSVALFFGPFATIPGLIYVFV, FILHANTPVMGASMWVFLLLG, and WITPLLLVVVTAALLPSSSFL. Residue Ser144 is the Nucleophile of the active site. His197 is an active-site residue. Residues 198–218 form a helical membrane-spanning segment; the sequence is LAGLLVGYGFGLGYLKFLAPP.

It belongs to the peptidase S54 family.

The protein resides in the golgi apparatus membrane. It is found in the golgi apparatus. It localises to the cis-Golgi network membrane. The enzyme catalyses Cleaves type-1 transmembrane domains using a catalytic dyad composed of serine and histidine that are contributed by different transmembrane domains.. In terms of biological role, probable rhomboid-type serine protease that catalyzes intramembrane proteolysis. This is Rhomboid-type serine protease 2 (rbd-2) from Neurospora crassa (strain ATCC 24698 / 74-OR23-1A / CBS 708.71 / DSM 1257 / FGSC 987).